The chain runs to 138 residues: Cofilin (138 aa).

Residues 2 to 136 (SSGVQPTQEC…TKDALFEKAT (135 aa)) form the ADF-H domain.

This sequence belongs to the actin-binding proteins ADF family.

The protein resides in the cytoplasm. The protein localises to the cytoskeleton. It localises to the nucleus matrix. Functionally, controls reversibly actin polymerization and depolymerization in a pH-sensitive manner. It has the ability to bind G- and F-actin in a 1:1 ratio of cofilin to actin. Binding to F-actin is regulated by tropomyosin. It is the major component of intranuclear and cytoplasmic actin rods. Required for accumulation of actin at the cell division site via depolymerizing actin at the cell ends. In association with myosin II has a role in the assembly of the contractile ring via severing actin filaments. Involved in the maintenance of the contractile ring once formed. In association with profilin and capping protein, has a role in the mitotic reorganization of the actin cytoskeleton. In Cryptococcus neoformans var. neoformans serotype D (strain B-3501A) (Filobasidiella neoformans), this protein is Cofilin (COF1).